We begin with the raw amino-acid sequence, 1910 residues long: C2 domain-containing protein (1910 aa).

Basic and acidic residues predominate over residues 1–28; the sequence is MMKLKEMVEAAEAKVESKPPQAAEEKAP. 3 disordered regions span residues 1–54, 355–377, and 398–428; these read MMKL…EPLD, AMKLPNRGTRSPSGLESNRPEDG, and LEELPASLRPPLSKRRKGEDKKDGNKADGPQ. Over residues 414-423 the composition is skewed to basic and acidic residues; sequence KGEDKKDGNK. The C2 domain occupies 557-678; the sequence is QLGEVSESDS…FFNEKHNKRN (122 aa). 2 stretches are compositionally biased toward basic and acidic residues: residues 1192–1205 and 1215–1228; these read LAQKEKQSREDAQR and GHEGADNGAEDKQG. Disordered regions lie at residues 1192–1267, 1405–1424, 1431–1654, 1666–1747, 1822–1841, and 1879–1910; these read LAQK…VKKG, ATAGEGEQQTSEGIPTRDMQ, LEEA…SMGA, QRKH…FLSS, AKEEKDLIARQPPPARDWSD, and DACSRRAESSNESRTTAGAKLRQQQLDLAGRT. Low complexity-rich tracts occupy residues 1239–1257 and 1405–1414; these read AAAAAVAEESVSAEAVQGA and ATAGEGEQQT. A compositionally biased stretch (basic residues) spans 1440-1469; it reads KKKKKKEKKEKKEKKEKKEKKEKKEKKKKK. Residues 1492–1502 show a composition bias toward low complexity; sequence PAAAIPSVLLP. Basic residues predominate over residues 1517–1526; sequence KKEKKEKKKK. The segment covering 1550 to 1561 has biased composition (low complexity); that stretch reads PAAAIPSILLPA. The span at 1569-1584 shows a compositional bias: basic and acidic residues; it reads EKPKEKKTEKKKEKHT. Positions 1595 to 1604 are enriched in polar residues; the sequence is LPESETTAVV. 2 stretches are compositionally biased toward low complexity: residues 1620–1629 and 1675–1698; these read VPSSIASSEA and SSSSSSEVSASSASSLSPSSSSSS. The segment covering 1701–1711 has biased composition (basic and acidic residues); sequence AETRAKADALR. 2 stretches are compositionally biased toward low complexity: residues 1712–1722 and 1729–1747; these read ARLQAAQARLA and VSSSETESSETSEASFLSS. The stretch at 1766–1828 forms a coiled coil; sequence QQRLQKMVSG…TRRAKEEKDL (63 aa). Over residues 1890-1904 the composition is skewed to polar residues; that stretch reads ESRTTAGAKLRQQQL.

It localises to the membrane. Functionally, regulates microneme secretion. Probably involved in regulation of rhoptry and dense granule secretion. The protein is C2 domain-containing protein of Toxoplasma gondii.